Here is a 333-residue protein sequence, read N- to C-terminus: Antimicrobial peptides (333 aa).

An N-terminal signal peptide occupies residues M1–A23. Positions A23 to S52 are disordered. A propeptide spans D24 to D54 (acidic peptide 1). Residues P29–S43 show a composition bias toward basic and acidic residues. Position 55 is a pyrrolidone carboxylic acid (Q55). Intrachain disulfides connect C60–C70 and C61–C74. The propeptide at A75–D102 is acidic peptide 2. Residue Q103 is modified to Pyrrolidone carboxylic acid. Intrachain disulfides connect C108-C118 and C109-C122. The propeptide at Q123–D148 is acidic peptide 3. Q149 is subject to Pyrrolidone carboxylic acid. Disulfide bonds link C154/C164 and C155/C168. A propeptide spans Q169–D196 (acidic peptide 4). Position 197 is a pyrrolidone carboxylic acid (Q197). Intrachain disulfides connect C202–C212 and C203–C216. Positions S217–G232 are cleaved as a propeptide — acidic peptide 5. A Pyrrolidone carboxylic acid modification is found at Q233. 2 disulfide bridges follow: C238-C248 and C239-C252. A propeptide spans H253–D278 (acidic peptide 6). Q279 carries the post-translational modification Pyrrolidone carboxylic acid. Disulfide bonds link C284/C294 and C285/C298. Residues Q299–V333 constitute a propeptide, acidic peptide 7.

Post-translationally, the N-terminal of all peptides are blocked. In terms of processing, the 4 cysteine residues of all peptides are involved in intrachain disulfide bonds.

Its subcellular location is the secreted. Functionally, plays a role in the defense of the germinating seed against microorganisms, by inhibiting the growth of a range of filamentous fungi and bacteria, especially Gram-positive bacteria. Not cytotoxic for cultured human cells and are the smallest known plant-derived antimicrobial peptides. Peptide IB-AMP4 has a higher antifungal activity than IB-AMP1. This chain is Antimicrobial peptides (AMP), found in Impatiens balsamina (Balsam).